Reading from the N-terminus, the 747-residue chain is Photosystem I P700 chlorophyll a apoprotein A2 (747 aa).

8 helical membrane passes run 46–69 (LFATHFGHLAIIGLWVAGNLFHIA), 135–158 (LFQGAIFLNILVCWLLFAGWLHLQ), 175–199 (LNHHLAVLFGFSSIAWTGHLVHVAI), 273–291 (IAHHHLAIGVMFIIAGHMY), 341–364 (LHFQLGLALASLGAACSLVAQHMG), 380–406 (SALYTHHQYIAMFLMVGAFSHGAIFFV), 428–450 (ALISHLSWVTMLLGFHTLGIYVH), and 530–548 (FLVHHAIALGLHTTALILI). 2 residues coordinate [4Fe-4S] cluster: C572 and C581. Transmembrane regions (helical) follow at residues 588–609 (ATYLAMFWALNTIAWITFYWHW) and 656–678 (LSPWAWMFLFGHLIWATGFMFLI). Divinyl chlorophyll a is bound by residues H667, M675, and Y683. Residue W684 coordinates phylloquinone. Residues 720 to 740 (LVGLTHFTVGNFVTFGAFVIA) traverse the membrane as a helical segment.

This sequence belongs to the PsaA/PsaB family. In terms of assembly, the PsaA/B heterodimer binds the P700 divinyl chlorophyll special pair and subsequent electron acceptors. PSI consists of a core antenna complex that captures photons, and an electron transfer chain that converts photonic excitation into a charge separation. The cyanobacterial PSI reaction center is composed of one copy each of PsaA,B,C,D,E,F,I,J,K,L,M and X, and forms trimeric complexes. PSI electron transfer chain: 5 divinyl chlorophyll a, 1 divinyl chlorophyll a', 2 phylloquinones and 3 4Fe-4S clusters. PSI core antenna: 90 divinyl chlorophyll a, 22 carotenoids, 3 phospholipids and 1 galactolipid. P700 is a divinyl chlorophyll a/divinyl chlorophyll a' dimer, A0 is one or more divinyl chlorophyll a, A1 is one or both phylloquinones and FX is a shared 4Fe-4S iron-sulfur center. is required as a cofactor.

Its subcellular location is the cellular thylakoid membrane. The catalysed reaction is reduced [plastocyanin] + hnu + oxidized [2Fe-2S]-[ferredoxin] = oxidized [plastocyanin] + reduced [2Fe-2S]-[ferredoxin]. PsaA and PsaB bind P700, the primary electron donor of photosystem I (PSI), as well as the electron acceptors A0, A1 and FX. PSI is a plastocyanin/cytochrome c6-ferredoxin oxidoreductase, converting photonic excitation into a charge separation, which transfers an electron from the donor P700 chlorophyll pair to the spectroscopically characterized acceptors A0, A1, FX, FA and FB in turn. Oxidized P700 is reduced on the lumenal side of the thylakoid membrane by plastocyanin or cytochrome c6. In Prochlorococcus marinus (strain SARG / CCMP1375 / SS120), this protein is Photosystem I P700 chlorophyll a apoprotein A2.